The sequence spans 125 residues: Large ribosomal subunit protein bL19 (125 aa).

This sequence belongs to the bacterial ribosomal protein bL19 family.

Functionally, this protein is located at the 30S-50S ribosomal subunit interface and may play a role in the structure and function of the aminoacyl-tRNA binding site. The sequence is that of Large ribosomal subunit protein bL19 from Wolbachia pipientis subsp. Culex pipiens (strain wPip).